The chain runs to 108 residues: UPF0060 membrane protein Nwi_1459 (108 aa).

4 consecutive transmembrane segments (helical) span residues Ala5–Leu25, Val31–Val51, Ala61–Ile81, and Leu88–Ile108.

This sequence belongs to the UPF0060 family.

Its subcellular location is the cell inner membrane. In Nitrobacter winogradskyi (strain ATCC 25391 / DSM 10237 / CIP 104748 / NCIMB 11846 / Nb-255), this protein is UPF0060 membrane protein Nwi_1459.